The following is a 310-amino-acid chain: Coproporphyrin III ferrochelatase (310 aa).

The Fe(2+) site is built by H184 and E265.

It belongs to the ferrochelatase family.

The protein resides in the cytoplasm. The catalysed reaction is Fe-coproporphyrin III + 2 H(+) = coproporphyrin III + Fe(2+). It functions in the pathway porphyrin-containing compound metabolism; protoheme biosynthesis. Functionally, involved in coproporphyrin-dependent heme b biosynthesis. Catalyzes the insertion of ferrous iron into coproporphyrin III to form Fe-coproporphyrin III. This Limosilactobacillus reuteri (strain DSM 20016) (Lactobacillus reuteri) protein is Coproporphyrin III ferrochelatase.